A 710-amino-acid chain; its full sequence is Dynein axonemal assembly factor 3 homolog (710 aa).

The disordered stretch occupies residues 403–487; sequence GAEAGAGAGP…DSDPAAAAST (85 aa). Residues 404–416 show a composition bias toward gly residues; that stretch reads AEAGAGAGPGGEA. The span at 417–438 shows a compositional bias: low complexity; that stretch reads AAGASSSSGKEEAAAAAAAGKE. Residues 453-462 are compositionally biased toward gly residues; that stretch reads SGSGAPGAGT. A compositionally biased stretch (low complexity) spans 478–487; the sequence is DSDPAAAAST.

The protein belongs to the DNAAF3 family.

The protein resides in the cytoplasm. Functionally, required for the assembly of axonemal inner and outer dynein arms. Involved in preassembly of dyneins into complexes before their transport into cilia. The sequence is that of Dynein axonemal assembly factor 3 homolog (DAB1) from Chlamydomonas reinhardtii (Chlamydomonas smithii).